Reading from the N-terminus, the 225-residue chain is LexA repressor (225 aa).

Positions 26–46 form a DNA-binding region, H-T-H motif; that stretch reads YEEMKDSLNLKSKSGIHRLIS. Residues S146 and K184 each act as for autocatalytic cleavage activity in the active site.

The protein belongs to the peptidase S24 family. As to quaternary structure, homodimer.

The catalysed reaction is Hydrolysis of Ala-|-Gly bond in repressor LexA.. Represses a number of genes involved in the response to DNA damage (SOS response), including recA and lexA. In the presence of single-stranded DNA, RecA interacts with LexA causing an autocatalytic cleavage which disrupts the DNA-binding part of LexA, leading to derepression of the SOS regulon and eventually DNA repair. This chain is LexA repressor, found in Pelagibacter ubique (strain HTCC1062).